The following is a 419-amino-acid chain: 1,4-beta-D-glucan cellobiohydrolase CEL6B (419 aa).

The signal sequence occupies residues 1 to 47 (MGESFLLLQPASPALSPTPSSLLLGPTITMRADVLIAALATGALVAA). Substrate contacts are provided by Trp-111 and Ser-113. Residues Asp-152 and Asp-199 each act as proton donor in the active site. Trp-247 is a binding site for substrate. N-linked (GlcNAc...) asparagine glycosylation is present at Asn-284. Asn-287 lines the substrate pocket. Asn-298 carries N-linked (GlcNAc...) asparagine glycosylation. Trp-347 provides a ligand contact to substrate. An N-linked (GlcNAc...) asparagine glycan is attached at Asn-364. Substrate contacts are provided by Lys-375 and Glu-379.

The protein belongs to the glycosyl hydrolase 6 (cellulase B) family. Both N- and O-glycosylated.

Its subcellular location is the secreted. It carries out the reaction Hydrolysis of (1-&gt;4)-beta-D-glucosidic linkages in cellulose and cellotetraose, releasing cellobiose from the non-reducing ends of the chains.. Its function is as follows. Exoglucanase that plays an important function in biomass degradation by catalyzing the hydrolysis of the non-reducing end beta-1,4-glucosidic linkages in cellulose and cellotetraose to release cellobiose. Hydrolyzes crystalline and amorphous cellulose but is inactive on hydroxyethyl cellulose, mannan, galactomannan, xyloglucan, arabinoxylan, arabinan, xylan, and pectin. The polypeptide is 1,4-beta-D-glucan cellobiohydrolase CEL6B (Podospora anserina (strain S / ATCC MYA-4624 / DSM 980 / FGSC 10383) (Pleurage anserina)).